The primary structure comprises 266 residues: UPF0354 protein LMHCC_0955 (266 aa).

This sequence belongs to the UPF0354 family.

The protein is UPF0354 protein LMHCC_0955 of Listeria monocytogenes serotype 4a (strain HCC23).